The primary structure comprises 389 residues: Cellobiose 2-epimerase (389 aa).

The protein belongs to the cellobiose 2-epimerase family.

The protein resides in the cytoplasm. It catalyses the reaction D-cellobiose = beta-D-glucosyl-(1-&gt;4)-D-mannopyranose. Its activity is regulated as follows. Enhanced by Mg(2+) and Ca(2+) ions, ethylenediaminetetraacetic acid, ethylene glycol tetraacetic acid and citrate. Inhibited by Al(3+), Fe(3+), Co(2+), Cu(2+), Zn(2+), Pb(2+) and Ag(+) ions, iodoacetate, 4-chloromercuribenzoate and N-bromosuccinimide. Catalyzes the reversible epimerization of cellobiose to 4-O-beta-D-glucopyranosyl-D-mannose (Glc-Man). Can also epimerize cellotriose to Glc-Glc-Man, cellotetraose to Glc-Glc-Glc-Man, and lactose to epilactose. This is Cellobiose 2-epimerase (ce-ne1) from Ruminococcus albus.